The primary structure comprises 211 residues: ATP-dependent dethiobiotin synthetase BioD 2 (211 aa).

An ATP-binding site is contributed by 13-18 (DIGKTI). Mg(2+) is bound at residue Thr17. The active site involves Lys38. A substrate-binding site is contributed by Thr42. ATP contacts are provided by residues Asp50, 115–118 (EGAG), and 175–176 (NT). The Mg(2+) site is built by Asp50 and Glu115.

Belongs to the dethiobiotin synthetase family. In terms of assembly, homodimer. Requires Mg(2+) as cofactor.

The protein localises to the cytoplasm. The catalysed reaction is (7R,8S)-7,8-diammoniononanoate + CO2 + ATP = (4R,5S)-dethiobiotin + ADP + phosphate + 3 H(+). The protein operates within cofactor biosynthesis; biotin biosynthesis; biotin from 7,8-diaminononanoate: step 1/2. In terms of biological role, catalyzes a mechanistically unusual reaction, the ATP-dependent insertion of CO2 between the N7 and N8 nitrogen atoms of 7,8-diaminopelargonic acid (DAPA, also called 7,8-diammoniononanoate) to form a ureido ring. In Haemophilus ducreyi (strain 35000HP / ATCC 700724), this protein is ATP-dependent dethiobiotin synthetase BioD 2.